A 75-amino-acid chain; its full sequence is Small ribosomal subunit protein bS16 (75 aa).

The protein belongs to the bacterial ribosomal protein bS16 family.

The polypeptide is Small ribosomal subunit protein bS16 (Helicobacter pylori (strain G27)).